Reading from the N-terminus, the 200-residue chain is Transgelin (200 aa).

At Ala2 the chain carries N-acetylalanine. The 114-residue stretch at 24-137 (DELEDRLVEW…RTLVALGSLA (114 aa)) folds into the Calponin-homology (CH) domain. A Calponin-like repeat occupies 175–199 (IGLQMGTNKGASQAGMSYGRPRQII).

It belongs to the calponin family. As to quaternary structure, monomer. As to expression, gizzard, uterus, intestine, esophagus, aorta, and trace amounts in brain, liver and heart.

It is found in the cytoplasm. Actin cross-linking/gelling protein. In Gallus gallus (Chicken), this protein is Transgelin (TAGLN).